A 326-amino-acid polypeptide reads, in one-letter code: Peroxidase 1 (326 aa).

The signal sequence occupies residues 1-22 (MASSRVILALLLAAAAVMASSA). Position 23 is a pyrrolidone carboxylic acid (Gln23). 4 disulfide bridges follow: Cys33-Cys112, Cys66-Cys71, Cys118-Cys322, and Cys196-Cys231. His64 (proton acceptor) is an active-site residue. Asp65, Val68, Gly70, Asp72, and Ser74 together coordinate Ca(2+). N-linked (GlcNAc...) asparagine glycosylation is found at Asn82 and Asn153. Residue Pro159 coordinates substrate. An N-linked (GlcNAc...) asparagine glycan is attached at Asn164. Residue His189 participates in heme b binding. Thr190 contributes to the Ca(2+) binding site. N-linked (GlcNAc...) asparagine glycosylation is found at Asn205 and Asn237. Ca(2+) contacts are provided by Asp244, Ser247, and Asp252.

It belongs to the peroxidase family. Classical plant (class III) peroxidase subfamily. It depends on Ca(2+) as a cofactor. Heme b serves as cofactor.

It is found in the secreted. The catalysed reaction is 2 a phenolic donor + H2O2 = 2 a phenolic radical donor + 2 H2O. Its function is as follows. Removal of H(2)O(2), oxidation of toxic reductants, biosynthesis and degradation of lignin, suberization, auxin catabolism, response to environmental stresses such as wounding, pathogen attack and oxidative stress. These functions might be dependent on each isozyme/isoform in each plant tissue. The sequence is that of Peroxidase 1 (PRX74) from Oryza sativa subsp. japonica (Rice).